The chain runs to 439 residues: Acyl-coenzyme A thioesterase 10, mitochondrial (439 aa).

The N-terminal 21 residues, 1–21, are a transit peptide targeting the mitochondrion; sequence MKRAAMRLWTLNKGLLTHGRG. 2 HotDog ACOT-type domains span residues 85-209 and 289-401; these read SYIE…QDSE and EDTK…EKEV.

The protein belongs to the acyl coenzyme A hydrolase family.

It localises to the mitochondrion. Functionally, catalyzes the hydrolysis of acyl-CoAs into free fatty acids and coenzyme A (CoASH), regulating their respective intracellular levels. Active on long chain acyl-CoAs. The polypeptide is Acyl-coenzyme A thioesterase 10, mitochondrial (Mus musculus (Mouse)).